The sequence spans 173 residues: T cell receptor gamma constant 1 (173 aa).

The 95-residue stretch at 10–104 (PKPTIFLPSI…NKNGVDQEII (95 aa)) folds into the Ig-like domain. C32 and C88 are disulfide-bonded. N-linked (GlcNAc...) asparagine glycans are attached at residues N66, N120, N126, and N135. A helical transmembrane segment spans residues 139–161 (YYMYLLLLLKSVVYFAIITCCLL).

As to quaternary structure, gamma-delta TR is a heterodimer composed of a gamma and delta chain; disulfide-linked. The gamma-delta TR is associated with the transmembrane signaling CD3 coreceptor proteins following the stoichiometry: a single gamma-delta TR heterodimer associates with one CD3D-CD3E heterodimer, one CD3G-CD3E heterodimer and one CD247 homodimer forming a stable octameric structure. Upon activation, gamma-delta TR complex associates with FCER1G to initiate intracellular signaling.

The protein localises to the cell membrane. Functionally, constant region of T cell receptor (TR) gamma chain that participates in the antigen recognition. Gamma-delta TRs recognize a variety of self and foreign non-peptide antigens frequently expressed at the epithelial boundaries between the host and external environment, including endogenous lipids presented by MH-like protein CD1D and phosphoantigens presented by butyrophilin-like molecule BTN3A1. Upon antigen recognition induces rapid, innate-like immune responses involved in pathogen clearance and tissue repair. Binding of gamma-delta TR complex to antigen triggers phosphorylation of immunoreceptor tyrosine-based activation motifs (ITAMs) in the CD3 chains by the LCK and FYN kinases, allowing the recruitment, phosphorylation, and activation of ZAP70 that facilitates phosphorylation of the scaffolding proteins LCP2 and LAT. This lead to the formation of a supramolecular signalosome that recruits the phospholipase PLCG1, resulting in calcium mobilization and ERK activation, ultimately leading to T cell expansion and differentiation into effector cells. Gamma-delta TRs are produced through somatic rearrangement of a limited repertoire of variable (V), diversity (D), and joining (J) genes. The potential diversity of gamma-delta TRs is conferred by the unique ability to rearrange (D) genes in tandem and to utilize all three reading frames. The combinatorial diversity is considerably increased by the sequence exonuclease trimming and random nucleotide (N) region additions which occur during the V-(D)-J rearrangements. This Homo sapiens (Human) protein is T cell receptor gamma constant 1.